Consider the following 757-residue polypeptide: MNDCGSLFNKKLFKMNLLFKHLKLQQHLKLQQKPLLNNSSINNNINNNNNNNNNNNSNNDSNNTNTNIFNNSFLNSDLIERLIIKFTIGYLKNNITEDYIEQILLENQNNFIKSTTTSNYILEENNNNNNNNNNNNNNNNNNNNNNNNNNNNNNNNNSSSSSSSILSKFNKLEEDNELELQKKQKQQLEQQEEELFNQFNFLEGIEDQNDFLSEQETIQKIKFLIKMTAKSMSNYSSPNTLIPSVSKTYISPFGLSSNGSTNNHNNNNNNNHHHHSNNGNLIESSNNVNNQLNVSNYNNNNSNHYDENNQFDIFLIPTEMLVHLLSFLSANDLWRISLTCKRIWYIVDVFKFWELLFEQTCPRIYYAMQFNSRWSNPTSFQSKMILCYIDRLPTDNYKNFDKSDESGQIKKIIGVMNENLHNPMILRETCYILKRLSYRQRKEDEHESLIARYGGISLILQAMKNHPYDAGVQEDACGALGNLTCDSPNNMGLYSNDNYLSVVEQGGIQLILQAMKNHMMNPGVQYNTSFVLRNLARNDVSESRVAIEGGIQSIATAMKNHPNHIGIQTQGCGALRNLGCNDSNKVLSAKEGGIGLILRAMRSFSSHPDLQLNGCGALRNLARNEDNKNMISRQNGIQLVLGAMSNHPDDPDVQDEGCAALINLAYQDEANEETIAREGGINLILKAMRNHPFHSGVQMQGRGALKNLSCNPKNKLTIARSGGIELMNIAMQNHPNFANRFLELSRILQVALEDGNI.

3 disordered regions span residues 39-63 (SSIN…DSNN), 122-166 (LEEN…SSIL), and 256-285 (SSNG…IESS). A coiled-coil region spans residues 121 to 205 (ILEENNNNNN…FNQFNFLEGI (85 aa)). Low complexity-rich tracts occupy residues 125–164 (NNNN…SSSS) and 256–270 (SSNG…NNNN). One can recognise an F-box domain in the interval 310-356 (QFDIFLIPTEMLVHLLSFLSANDLWRISLTCKRIWYIVDVFKFWELL). ARM repeat units follow at residues 454 to 498 (GGIS…SNDN), 506 to 548 (GGIQ…VAIE), 549 to 591 (GGIQ…SAKE), 592 to 634 (GGIG…ISRQ), 635 to 678 (NGIQ…IARE), and 679 to 723 (GGIN…RSGG).

Belongs to the beta-catenin family.

It localises to the cytoplasm. The protein resides in the cell junction. Required to regulate pattern formation during multi-cellular stages of development and for the formation of adherens junctions. Plays a structural role during the regulation of stalk formation. Involved in cell signaling. Required for spore-cell differentiation. Overexpression increases number and size of cell junctions and reduces spore-cell formation. The polypeptide is Protein aardvark (aarA) (Dictyostelium discoideum (Social amoeba)).